The following is a 679-amino-acid chain: Tripartite terminase subunit 1 (679 aa).

A C3H1-type zinc finger spans residues Cys-180–His-208.

Belongs to the herpesviridae TRM1 protein family. Associates with TRM2 and TRM3 to form the tripartite terminase complex. Interacts with portal protein.

Its subcellular location is the host nucleus. Its function is as follows. Component of the molecular motor that translocates viral genomic DNA in empty capsid during DNA packaging. Forms a tripartite terminase complex together with TRM2 and TRM3 in the host cytoplasm. Once the complex reaches the host nucleus, it interacts with the capsid portal vertex. This portal forms a ring in which genomic DNA is translocated into the capsid. TRM1 carries an endonuclease activity that plays an important role for the cleavage of concatemeric viral DNA into unit length genomes. The polypeptide is Tripartite terminase subunit 1 (Saimiriine herpesvirus 2 (strain 11) (SaHV-2)).